The chain runs to 424 residues: S-adenosylmethionine synthase (424 aa).

Histidine 14 lines the ATP pocket. Aspartate 16 contacts Mg(2+). Position 42 (glutamate 42) interacts with K(+). Glutamate 55 and glutamine 98 together coordinate L-methionine. The tract at residues 98 to 108 is flexible loop; sequence QSNDISRGIER. Residues 165–167, 242–243, aspartate 251, 257–258, alanine 274, and lysine 278 each bind ATP; these read DAK, KF, and RK. Residue aspartate 251 coordinates L-methionine. Residue lysine 282 coordinates L-methionine.

Belongs to the AdoMet synthase family. In terms of assembly, homotetramer; dimer of dimers. It depends on Mg(2+) as a cofactor. Requires K(+) as cofactor.

Its subcellular location is the cytoplasm. The catalysed reaction is L-methionine + ATP + H2O = S-adenosyl-L-methionine + phosphate + diphosphate. Its pathway is amino-acid biosynthesis; S-adenosyl-L-methionine biosynthesis; S-adenosyl-L-methionine from L-methionine: step 1/1. Catalyzes the formation of S-adenosylmethionine (AdoMet) from methionine and ATP. The overall synthetic reaction is composed of two sequential steps, AdoMet formation and the subsequent tripolyphosphate hydrolysis which occurs prior to release of AdoMet from the enzyme. In Azobacteroides pseudotrichonymphae genomovar. CFP2, this protein is S-adenosylmethionine synthase.